We begin with the raw amino-acid sequence, 81 residues long: Sulfur carrier protein TusA (81 aa).

C19 acts as the Cysteine persulfide intermediate in catalysis.

It belongs to the sulfur carrier protein TusA family.

It is found in the cytoplasm. Functionally, sulfur carrier protein which probably makes part of a sulfur-relay system. This chain is Sulfur carrier protein TusA, found in Shewanella sediminis (strain HAW-EB3).